Consider the following 1427-residue polypeptide: Double-stranded DNA deaminase toxin A (1427 aa).

The next 2 membrane-spanning stretches (helical) occupy residues 16–36 and 43–63; these read ALAG…AVAF and FGVA…LLSI. YD repeat units follow at residues 469-501, 548-584, 720-747, and 977-1008; these read RVVE…DGRT, YDDA…GPDG, NARG…GRLR, and YDGA…ISRA. A C-terminal effector domain, has cytidine deaminase activity region spans residues 1264 to 1427; it reads IGLNGGANVY…SPKSPTKGGC (164 aa). Zn(2+)-binding residues include histidine 1345, cysteine 1373, and cysteine 1376. A disordered region spans residues 1402-1427; that stretch reads KRGATGETKVFTGNSNSPKSPTKGGC. Residues 1412–1421 show a composition bias toward polar residues; that stretch reads FTGNSNSPKS.

This sequence belongs to the RHS/WapA nuclease family. In terms of assembly, the toxic domain forms a 1:1 complex with the DddI immunity protein.

The protein localises to the membrane. The enzyme catalyses a 2'-deoxycytidine in double-stranded DNA + H2O + H(+) = a 2'-deoxyuridine in double-stranded DNA + NH4(+). In terms of biological role, toxic component of a toxin-immunity protein module, which functions as a cellular contact-dependent growth inhibition (CDI) system. CDI modules allow bacteria to communicate with and inhibit the growth of closely related neighboring bacteria in a contact-dependent fashion. Bacteria that have this module inhibit or kill bacteria without it, giving them a growth advantage. Probably specifically inhibited by cognate immunity protein DddI. The C-terminal 163 residue fragment has double-stranded DNA cytidine deaminase activity; it does not deaminate ssDNA, ssRNA or dsRNA. Leads to C:G to T:A conversions in deaminated DNA. Preferentially deaminates 5'-TC-3' substrates. In Burkholderia cenocepacia (strain H111), this protein is Double-stranded DNA deaminase toxin A.